We begin with the raw amino-acid sequence, 132 residues long: Small ribosomal subunit protein uS8 (132 aa).

The protein belongs to the universal ribosomal protein uS8 family. Part of the 30S ribosomal subunit. Contacts proteins S5 and S12.

Its function is as follows. One of the primary rRNA binding proteins, it binds directly to 16S rRNA central domain where it helps coordinate assembly of the platform of the 30S subunit. In Afipia carboxidovorans (strain ATCC 49405 / DSM 1227 / KCTC 32145 / OM5) (Oligotropha carboxidovorans), this protein is Small ribosomal subunit protein uS8.